Consider the following 589-residue polypeptide: Mini-chromosome maintenance complex-binding protein (589 aa).

The interval 163 to 211 (VDEEMTDSMDSSTLEAGRNGSPFKKMKVGEATSSASESQVPQTSGIPPA) is disordered. Over residues 193-207 (ATSSASESQVPQTSG) the composition is skewed to polar residues.

This sequence belongs to the MCMBP family. In terms of assembly, interacts with the MCM complex.

The protein localises to the nucleus. Functionally, associated component of the MCM complex that acts as a regulator of DNA replication. Binds to the MCM complex during late S phase and may act by promoting the disassembly of the MCM complex from chromatin. Required for sister chromatid cohesion. This chain is Mini-chromosome maintenance complex-binding protein (ETG1), found in Arabidopsis thaliana (Mouse-ear cress).